The chain runs to 95 residues: Small ribosomal subunit protein uS19 (95 aa).

Belongs to the universal ribosomal protein uS19 family.

Protein S19 forms a complex with S13 that binds strongly to the 16S ribosomal RNA. This is Small ribosomal subunit protein uS19 from Chloroflexus aurantiacus (strain ATCC 29366 / DSM 635 / J-10-fl).